The primary structure comprises 352 residues: Sortase SrtE1 (352 aa).

2 stretches are compositionally biased toward basic and acidic residues: residues 1–10 (MTALRPERDS) and 34–45 (RYEESAAGEENR). Positions 1–132 (MTALRPERDS…RQARARKPGA (132 aa)) are disordered. At 1-139 (MTALRPERDS…PGAAVVASRA (139 aa)) the chain is on the cytoplasmic side. The segment at 15 to 79 (DQGSSYGQPY…TGPIGGGPDG (65 aa)) is required for protein stability. Over residues 71 to 82 (GPIGGGPDGGGR) the composition is skewed to gly residues. Residues 83–97 (AARRKAAKRRHGRRG) are compositionally biased toward basic residues. The helical transmembrane segment at 140–160 (IGEIFITTGVLMLLFVTYQLW) threads the bilayer. Residues 161–352 (WTNVRAHAQA…SKGKPDALVS (192 aa)) are Extracellular-facing. Active-site residues include H251 and C320. R329 functions as the Proton donor in the catalytic mechanism.

It belongs to the bacterial sortase family. Class E subfamily.

It is found in the cell membrane. It carries out the reaction The enzyme catalyzes a cell wall sorting reaction in which a surface protein with a sorting signal containing a LPXTG motif is cleaved between the Thr and Gly residue. The resulting threonine carboxyl end of the protein is covalently attached to a pentaglycine cross-bridge of peptidoglycan.. Functionally, transpeptidase that anchors surface proteins to the cell wall. Recognizes both Leu-Ala-x-Thr-Gly and Leu-Pro-x-Thr-Gly, with a preference for the former. Unlike the S.aureus sortase it cleaves not only the Thr-Gly motif but also the Ala-X bond; Ala-Glu and Ala-His bonds are better substrates than the Thr-Gly motif in vitro. Among its possible substrates are the chaplins ChpA, ChpB and ChpC; this enzyme is less important for ChpC attachment than is SrtE2. A double knockout mutant of srtE1 and srtE2 shows a developmental defect in aerial hyphae formation more dramatic than that due to chaplin deletion. The chain is Sortase SrtE1 from Streptomyces coelicolor (strain ATCC BAA-471 / A3(2) / M145).